We begin with the raw amino-acid sequence, 218 residues long: Pyridoxine/pyridoxamine 5'-phosphate oxidase (218 aa).

Substrate-binding positions include 14–17 (RREY) and Lys72. FMN contacts are provided by residues 67–72 (RIVLLK), 82–83 (YT), Arg88, Lys89, and Gln111. Substrate is bound by residues Tyr129, Arg133, and Ser137. Residues 146-147 (QS) and Trp191 each bind FMN. 197–199 (RLH) is a substrate binding site. Position 201 (Arg201) interacts with FMN.

It belongs to the pyridoxamine 5'-phosphate oxidase family. In terms of assembly, homodimer. It depends on FMN as a cofactor.

It catalyses the reaction pyridoxamine 5'-phosphate + O2 + H2O = pyridoxal 5'-phosphate + H2O2 + NH4(+). The enzyme catalyses pyridoxine 5'-phosphate + O2 = pyridoxal 5'-phosphate + H2O2. It functions in the pathway cofactor metabolism; pyridoxal 5'-phosphate salvage; pyridoxal 5'-phosphate from pyridoxamine 5'-phosphate: step 1/1. Its pathway is cofactor metabolism; pyridoxal 5'-phosphate salvage; pyridoxal 5'-phosphate from pyridoxine 5'-phosphate: step 1/1. Catalyzes the oxidation of either pyridoxine 5'-phosphate (PNP) or pyridoxamine 5'-phosphate (PMP) into pyridoxal 5'-phosphate (PLP). The sequence is that of Pyridoxine/pyridoxamine 5'-phosphate oxidase from Klebsiella pneumoniae subsp. pneumoniae (strain ATCC 700721 / MGH 78578).